A 409-amino-acid polypeptide reads, in one-letter code: Adenosine receptor A2a (409 aa).

At 1–4 the chain is on the extracellular side; that stretch reads MSSS. Residues 5-29 traverse the membrane as a helical segment; that stretch reads VYITVELVIAVLAILGNVLVCWAVW. Topologically, residues 30–39 are cytoplasmic; sequence INSNLQNVTN. A helical membrane pass occupies residues 40–63; that stretch reads YFVVSLAAADIAVGVLAIPFAITI. The Extracellular segment spans residues 64-74; that stretch reads STGFCAACHGC. 3 cysteine pairs are disulfide-bonded: Cys68-Cys156, Cys71-Cys143, and Cys74-Cys163. A helical transmembrane segment spans residues 75-97; the sequence is LFFACFVLVLTQSSIFSLLTITI. Topologically, residues 98–117 are cytoplasmic; that stretch reads DRYIAIRIPLRYNGLVTCTR. Residues 118-140 form a helical membrane-spanning segment; it reads AKGIIAICWVLSFAIGLTPMLGW. Topologically, residues 141–170 are extracellular; that stretch reads NNCSQPKGDKNHSESCDEGQVTCLFEDVVP. Asn142 and Asn151 each carry an N-linked (GlcNAc...) asparagine glycan. Position 166 (Glu166) interacts with adenosine. Residues 171–195 traverse the membrane as a helical segment; the sequence is MNYMVYYNFFAFVLVPLLLMLGIYL. The Cytoplasmic segment spans residues 196–231; sequence RIFLAARRQLKQMESQPLPGERTRSTLQKEVHPAKS. The helical transmembrane segment at 232-255 threads the bilayer; it reads LAIIVGLFALCCLPLNIINCFTFF. Residue Asn250 coordinates adenosine. A disulfide bridge links Cys256 with Cys259. The Extracellular segment spans residues 256–263; the sequence is CPECDHAP. A helical transmembrane segment spans residues 264–287; it reads PWLMYLTIILSHGNSVVNPLIYAY. Residues Ser274 and His275 each coordinate adenosine. Over 288–409 the chain is Cytoplasmic; the sequence is RIREFRQTFR…PPAHGGAGVS (122 aa). Disordered stretches follow at residues 316–336 and 369–409; these read TSAR…LRLN and QRSH…AGVS.

The protein belongs to the G-protein coupled receptor 1 family. Interacts (via cytoplasmic C-terminal domain) with USP4; the interaction is direct. May interact with DRD4. Interacts with NECAB2. Interacts (via cytoplasmic C-terminal domain) with GAS2L2; interaction enhances receptor-mediated adenylyl cyclase activity. Post-translationally, ubiquitinated. Deubiquitinated by USP4; leading to stabilization and expression at the cell surface.

It localises to the cell membrane. Receptor for adenosine. The activity of this receptor is mediated by G proteins which activate adenylyl cyclase. This chain is Adenosine receptor A2a (ADORA2A), found in Cavia porcellus (Guinea pig).